We begin with the raw amino-acid sequence, 1388 residues long: ESX-5 secretion system protein EccC5 (1388 aa).

2 helical membrane-spanning segments follow: residues 38–58 (WLIV…AMVF) and 65–85 (FGGV…MMMF). FtsK domains are found at residues 477-679 (GELL…GAAQ), 855-1049 (QPPW…EDAK), and 1158-1351 (LQPV…DPDE). ATP-binding positions include 500–507 (GTTGSGKS), 873–880 (GAGGSGKT), and 1175–1182 (GRRECGRT).

As to quaternary structure, part of the ESX-5 / type VII secretion system (T7SS), which is composed of cytosolic and membrane components. The ESX-5 membrane complex is composed of EccB5, EccC5, EccD5 and EccE5.

It localises to the cell inner membrane. Its function is as follows. Part of the ESX-5 specialized secretion system, which is responsible for the secretion of EsxN and a number of PE_PGRS and PPE proteins. This component is essential for ESX-5 complex stability and secretion. The sequence is that of ESX-5 secretion system protein EccC5 from Mycobacterium marinum (strain ATCC BAA-535 / M).